We begin with the raw amino-acid sequence, 119 residues long: Toxin ICK-11 (119 aa).

An N-terminal signal peptide occupies residues 1–19 (MMKLYSLVIIATLAAAAFA). Cystine bridges form between Cys59/Cys74, Cys67/Cys80, Cys71/Cys116, and Cys73/Cys87.

The protein belongs to the neurotoxin 25 family. ICK-8 subfamily. In terms of tissue distribution, expressed by the venom gland.

It localises to the secreted. In terms of biological role, ion channel inhibitor. In Trittame loki (Brush-footed trapdoor spider), this protein is Toxin ICK-11.